Reading from the N-terminus, the 140-residue chain is Small ribosomal subunit protein uS12 (140 aa).

The residue at position 102 (Asp102) is a 3-methylthioaspartic acid.

Belongs to the universal ribosomal protein uS12 family. As to quaternary structure, part of the 30S ribosomal subunit. Contacts proteins S8 and S17. May interact with IF1 in the 30S initiation complex.

Functionally, with S4 and S5 plays an important role in translational accuracy. Its function is as follows. Interacts with and stabilizes bases of the 16S rRNA that are involved in tRNA selection in the A site and with the mRNA backbone. Located at the interface of the 30S and 50S subunits, it traverses the body of the 30S subunit contacting proteins on the other side and probably holding the rRNA structure together. The combined cluster of proteins S8, S12 and S17 appears to hold together the shoulder and platform of the 30S subunit. The protein is Small ribosomal subunit protein uS12 of Geobacillus stearothermophilus (Bacillus stearothermophilus).